The chain runs to 31 residues: Photosystem II reaction center protein T (31 aa).

A helical membrane pass occupies residues 3-23 (SFAYILILAFSIGTLFFAIAL).

This sequence belongs to the PsbT family. In terms of assembly, PSII is composed of 1 copy each of membrane proteins PsbA, PsbB, PsbC, PsbD, PsbE, PsbF, PsbH, PsbI, PsbJ, PsbK, PsbL, PsbM, PsbT, PsbX, PsbY, PsbZ, Psb30/Ycf12, peripheral proteins PsbO, CyanoQ (PsbQ), PsbU, PsbV and a large number of cofactors. It forms dimeric complexes.

The protein resides in the cellular thylakoid membrane. Found at the monomer-monomer interface of the photosystem II (PS II) dimer, plays a role in assembly and dimerization of PSII. PSII is a light-driven water plastoquinone oxidoreductase, using light energy to abstract electrons from H(2)O, generating a proton gradient subsequently used for ATP formation. The protein is Photosystem II reaction center protein T of Synechococcus sp. (strain RCC307).